Reading from the N-terminus, the 558-residue chain is Polypeptide N-acetylgalactosaminyltransferase 16 (558 aa).

The Cytoplasmic portion of the chain corresponds to 1-6 (MRKIRA). A helical; Signal-anchor for type II membrane protein membrane pass occupies residues 7-26 (NAIAILTVAWILGTFYYLWQ). Residues 27-558 (DNRAHAASSG…AQQWQLLPHT (532 aa)) lie on the Lumenal side of the membrane. Residues 33 to 54 (ASSGGRGAQRAGRRSEQLREDR) form a disordered region. Basic and acidic residues predominate over residues 45 to 54 (RRSEQLREDR). 5 cysteine pairs are disulfide-bonded: C113-C340, C331-C409, C441-C460, C486-C506, and C530-C543. The tract at residues 122-227 (LPATSVIITF…TEWLPPMLQR (106 aa)) is catalytic subdomain A. Substrate contacts are provided by D163 and R188. Mn(2+) is bound at residue D211. Substrate is bound at residue S212. H213 contacts Mn(2+). The segment at 286-348 (PIRTPVIAGG…PCSRVGHVFR (63 aa)) is catalytic subdomain B. W317 lines the substrate pocket. Residue H345 coordinates Mn(2+). The substrate site is built by R348, H351, and Y353. The Ricin B-type lectin domain maps to 428-555 (KEALPGIIKQ…DAQAQQWQLL (128 aa)).

It belongs to the glycosyltransferase 2 family. GalNAc-T subfamily. Mn(2+) is required as a cofactor.

It is found in the golgi apparatus membrane. It catalyses the reaction L-seryl-[protein] + UDP-N-acetyl-alpha-D-galactosamine = a 3-O-[N-acetyl-alpha-D-galactosaminyl]-L-seryl-[protein] + UDP + H(+). The enzyme catalyses L-threonyl-[protein] + UDP-N-acetyl-alpha-D-galactosamine = a 3-O-[N-acetyl-alpha-D-galactosaminyl]-L-threonyl-[protein] + UDP + H(+). Its pathway is protein modification; protein glycosylation. Catalyzes the initial reaction in O-linked oligosaccharide biosynthesis, the transfer of an N-acetyl-D-galactosamine residue to a serine or threonine residue on the protein receptor. This chain is Polypeptide N-acetylgalactosaminyltransferase 16 (GALNT16), found in Homo sapiens (Human).